The primary structure comprises 105 residues: Cell division protein FtsL (105 aa).

At 1–22 (MIGNERHGLVGVIGADLIRNAK) the chain is on the cytoplasmic side. The helical transmembrane segment at 23 to 43 (IPLILLVAVLISAVLVVTTAH) threads the bilayer. Residues 44–105 (RTRLLTAERE…DPSQENIVIK (62 aa)) lie on the Periplasmic side of the membrane.

It belongs to the FtsL family. In terms of assembly, part of a complex composed of FtsB, FtsL and FtsQ.

It is found in the cell inner membrane. Its function is as follows. Essential cell division protein. May link together the upstream cell division proteins, which are predominantly cytoplasmic, with the downstream cell division proteins, which are predominantly periplasmic. This is Cell division protein FtsL from Yersinia pestis.